A 258-amino-acid chain; its full sequence is Gene 3 protein (258 aa).

Residues Ser163–His176 are compositionally biased toward polar residues. The disordered stretch occupies residues Ser163–Lys258. Residues Ser214 to Thr240 are compositionally biased toward basic and acidic residues.

The sequence is that of Gene 3 protein from Equine herpesvirus 1 (strain Kentucky A) (EHV-1).